The primary structure comprises 338 residues: tRNA N6-adenosine threonylcarbamoyltransferase (338 aa).

The Fe cation site is built by His110 and His114. Residues 132–136 (VLSGG), Asp165, Gly178, and Asn274 contribute to the substrate site. Asp298 contacts Fe cation.

It belongs to the KAE1 / TsaD family. Fe(2+) serves as cofactor.

Its subcellular location is the cytoplasm. It catalyses the reaction L-threonylcarbamoyladenylate + adenosine(37) in tRNA = N(6)-L-threonylcarbamoyladenosine(37) in tRNA + AMP + H(+). In terms of biological role, required for the formation of a threonylcarbamoyl group on adenosine at position 37 (t(6)A37) in tRNAs that read codons beginning with adenine. Is involved in the transfer of the threonylcarbamoyl moiety of threonylcarbamoyl-AMP (TC-AMP) to the N6 group of A37, together with TsaE and TsaB. TsaD likely plays a direct catalytic role in this reaction. This Borrelia recurrentis (strain A1) protein is tRNA N6-adenosine threonylcarbamoyltransferase.